The sequence spans 237 residues: NAD-dependent protein deacylase (237 aa).

Residues methionine 1 to leucine 235 enclose the Deacetylase sirtuin-type domain. NAD(+) is bound at residue glycine 8–tryptophan 28. Substrate-binding residues include tyrosine 53 and arginine 56. Glutamine 86–aspartate 89 contributes to the NAD(+) binding site. Histidine 104 functions as the Proton acceptor in the catalytic mechanism. Residues cysteine 112, cysteine 115, cysteine 138, and cysteine 140 each contribute to the Zn(2+) site. Residues glycine 177–serine 179, asparagine 203–glutamate 205, and alanine 221 contribute to the NAD(+) site.

Belongs to the sirtuin family. Class III subfamily. The cofactor is Zn(2+).

The protein localises to the cytoplasm. It carries out the reaction N(6)-acetyl-L-lysyl-[protein] + NAD(+) + H2O = 2''-O-acetyl-ADP-D-ribose + nicotinamide + L-lysyl-[protein]. The enzyme catalyses N(6)-succinyl-L-lysyl-[protein] + NAD(+) + H2O = 2''-O-succinyl-ADP-D-ribose + nicotinamide + L-lysyl-[protein]. NAD-dependent lysine deacetylase and desuccinylase that specifically removes acetyl and succinyl groups on target proteins. Modulates the activities of several proteins which are inactive in their acylated form. This Mycobacterium leprae (strain TN) protein is NAD-dependent protein deacylase.